The sequence spans 277 residues: Large ribosomal subunit protein uL2m (277 aa).

The tract at residues 225–263 (AMNPVDHPHGGGEGKTSGGRPSVTPWSWPTKGQPTRSKR) is disordered. Polar residues predominate over residues 248–259 (TPWSWPTKGQPT).

The protein belongs to the universal ribosomal protein uL2 family.

The protein resides in the mitochondrion. The polypeptide is Large ribosomal subunit protein uL2m (RPL2) (Reclinomonas americana).